Reading from the N-terminus, the 588-residue chain is Phosphoinositide phosphatase SAC8 (588 aa).

Residues 37-56 (FSVNRRDGNIKPLDENASSG) are disordered. Over residues 40-50 (NRRDGNIKPLD) the composition is skewed to basic and acidic residues. Residues 129–455 (LQALETTPGL…GDEVSLQYAG (327 aa)) enclose the SAC domain. A Phosphatase catalytic core motif is present at residues 390–401 (RSNCIDCLDRTN). A run of 2 helical transmembrane segments spans residues 524 to 544 (SFLP…SFTI) and 555 to 575 (LASA…KANG).

Ubiquitous with a higher level of expression in young seedlings than in other tissues.

The protein resides in the endoplasmic reticulum membrane. Phosphoinositide phosphatase that hydrolyzes PtdIns(3)P and PtdIns(4)P. This Arabidopsis thaliana (Mouse-ear cress) protein is Phosphoinositide phosphatase SAC8 (SAC8).